We begin with the raw amino-acid sequence, 549 residues long: Arginine-containing cyclodipeptide synthase amaA (549 aa).

A Conserved DDXXE motif motif is present at residues 445–449 (DDRAE).

It belongs to the arginine-containing cyclodipeptide synthase family.

The catalysed reaction is L-prolyl-tRNA(Pro) + L-arginyl-tRNA(Arg) = cyclo(L-arginyl-L-prolyl) + tRNA(Pro) + tRNA(Arg) + 2 H(+). Its pathway is secondary metabolite biosynthesis. In terms of biological role, arginine-containing cyclodipeptide synthase; part of the cluster that mediates the biosynthesis of a highly modified cyclo-arginine-proline dipeptide (cRP). Within the pathway, amaA acts as the scaffold-generating enzyme and is responsible for formation of the cyclo-Arg-Pro diketopiperazine (cRW) from L-arginyl-tRNA(Arg) + L-prolyl-tRNA(Pro). Additional enzymes from the cluster then further modify the cyclo-Arg-Pro diketopiperazine (cRW) scaffold. This is Arginine-containing cyclodipeptide synthase amaA from Apiospora montagnei (Sphaeria apiospora).